A 183-amino-acid chain; its full sequence is uncharacterized protein (183 aa).

A disordered region spans residues 54–89 (DAASQSDPLPGGDGLTGGDSKATRRTSPRYYPPSEA).

This is an uncharacterized protein from Human cytomegalovirus (strain AD169) (HHV-5).